Reading from the N-terminus, the 145-residue chain is Putative pre-16S rRNA nuclease (145 aa).

Belongs to the YqgF nuclease family.

The protein resides in the cytoplasm. Functionally, could be a nuclease involved in processing of the 5'-end of pre-16S rRNA. The polypeptide is Putative pre-16S rRNA nuclease (Sulfurihydrogenibium sp. (strain YO3AOP1)).